A 333-amino-acid chain; its full sequence is NADH dehydrogenase (ubiquinone) complex I, assembly factor 6 (333 aa).

The N-terminal 44 residues, 1–44, are a transit peptide targeting the mitochondrion; that stretch reads MATSMLGSVRGPRPFGLANLFHRQPPRDAWERVRRLPGPSAVRR.

This sequence belongs to the NDUFAF6 family.

Its subcellular location is the mitochondrion inner membrane. Its function is as follows. Involved in the assembly of mitochondrial NADH:ubiquinone oxidoreductase complex (complex I) at early stages. May play a role in the biogenesis of complex I subunit MT-ND1. The chain is NADH dehydrogenase (ubiquinone) complex I, assembly factor 6 (Ndufaf6) from Mus musculus (Mouse).